Consider the following 168-residue polypeptide: MEITEDSKRKINYQIRLATLSDIDQIIRINRSALPENYPYYFFVEHLKEYGQAFYVADLEGEVVGYVMPRIEWGFSNLKHIPSLVRKGHIVSIAVLEPFRKIGVGTSLLQNSLKAMKDTYNAEEVYLEVRVTNYPAISLYKKFNFREVKLLKHYYADGEDAYLMAAPL.

The region spanning 13–168 (YQIRLATLSD…EDAYLMAAPL (156 aa)) is the N-acetyltransferase domain. Tyr38 contributes to the substrate binding site. His89 contributes to the Zn(2+) binding site. Residues 93–95 (IAV) and 101–106 (KIGVGT) each bind acetyl-CoA. CoA contacts are provided by residues 93–95 (IAV) and 101–106 (KIGVGT). Glu128 is a Zn(2+) binding site. Acetyl-CoA is bound by residues Asn133 and 140–142 (YKK). Asn133 contacts CoA. Tyr155 is a binding site for substrate.

This sequence belongs to the acetyltransferase family. ARD1 subfamily. Homodimer.

Its subcellular location is the cytoplasm. The catalysed reaction is N-terminal L-alanyl-[protein] + acetyl-CoA = N-terminal N(alpha)-acetyl-L-alanyl-[protein] + CoA + H(+). It catalyses the reaction N-terminal L-seryl-[protein] + acetyl-CoA = N-terminal N(alpha)-acetyl-L-seryl-[protein] + CoA + H(+). The enzyme catalyses N-terminal L-methionyl-L-leucyl-[protein] + acetyl-CoA = N-terminal N(alpha)-acetyl-L-methionyl-L-leucyl-[protein] + CoA + H(+). It carries out the reaction N-terminal L-methionyl-L-glutamyl-[protein] + acetyl-CoA = N-terminal N(alpha)-acetyl-L-methionyl-L-glutamyl-[protein] + CoA + H(+). Its function is as follows. Displays alpha (N-terminal) acetyltransferase activity. Catalyzes the covalent attachment of an acetyl moiety from acetyl-CoA to the free alpha-amino group at the N-terminus of a protein. In Sulfolobus acidocaldarius (strain ATCC 33909 / DSM 639 / JCM 8929 / NBRC 15157 / NCIMB 11770), this protein is N-alpha-acetyltransferase.